The sequence spans 345 residues: Phosphoribosylformylglycinamidine cyclo-ligase (345 aa).

This sequence belongs to the AIR synthase family.

It is found in the cytoplasm. The enzyme catalyses 2-formamido-N(1)-(5-O-phospho-beta-D-ribosyl)acetamidine + ATP = 5-amino-1-(5-phospho-beta-D-ribosyl)imidazole + ADP + phosphate + H(+). The protein operates within purine metabolism; IMP biosynthesis via de novo pathway; 5-amino-1-(5-phospho-D-ribosyl)imidazole from N(2)-formyl-N(1)-(5-phospho-D-ribosyl)glycinamide: step 2/2. This chain is Phosphoribosylformylglycinamidine cyclo-ligase, found in Enterobacter sp. (strain 638).